The primary structure comprises 258 residues: Protein OS-9 homolog (258 aa).

A signal peptide spans Met-1–Ala-18. N-linked (GlcNAc...) asparagine glycosylation is found at Asn-2, Asn-51, and Asn-70. In terms of domain architecture, MRH spans Thr-114–Leu-237. Cysteines 116 and 132 form a disulfide. A mannooligosaccharide derivative contacts are provided by Trp-127 and Gln-139. Asn-165 carries N-linked (GlcNAc...) asparagine glycosylation. Disulfide bonds link Cys-193-Cys-223 and Cys-208-Cys-235. Positions 194, 200, 219, and 225 each coordinate a mannooligosaccharide derivative.

Belongs to the OS-9 family. In terms of assembly, interacts with missfolded ER lumenal proteins.

Its subcellular location is the endoplasmic reticulum membrane. Lectin involved in the quality control of the secretory pathway. As a member of the endoplasmic reticulum-associated degradation lumenal (ERAD-L) surveillance system, targets misfolded endoplasmic reticulum lumenal glycoproteins for degradation. This Candida albicans (strain SC5314 / ATCC MYA-2876) (Yeast) protein is Protein OS-9 homolog (YOS9).